Here is a 301-residue protein sequence, read N- to C-terminus: tRNA pseudouridine synthase B (301 aa).

Catalysis depends on Asp-47, which acts as the Nucleophile.

The protein belongs to the pseudouridine synthase TruB family. Type 1 subfamily.

It carries out the reaction uridine(55) in tRNA = pseudouridine(55) in tRNA. In terms of biological role, responsible for synthesis of pseudouridine from uracil-55 in the psi GC loop of transfer RNAs. The polypeptide is tRNA pseudouridine synthase B (Cereibacter sphaeroides (strain ATCC 17025 / ATH 2.4.3) (Rhodobacter sphaeroides)).